The following is a 263-amino-acid chain: Indole-3-glycerol phosphate synthase (263 aa).

Belongs to the TrpC family.

The catalysed reaction is 1-(2-carboxyphenylamino)-1-deoxy-D-ribulose 5-phosphate + H(+) = (1S,2R)-1-C-(indol-3-yl)glycerol 3-phosphate + CO2 + H2O. It participates in amino-acid biosynthesis; L-tryptophan biosynthesis; L-tryptophan from chorismate: step 4/5. In Polaromonas naphthalenivorans (strain CJ2), this protein is Indole-3-glycerol phosphate synthase.